The chain runs to 585 residues: Parathyroid hormone/parathyroid hormone-related peptide receptor (585 aa).

The first 26 residues, M1 to V26, serve as a signal peptide directing secretion. The Extracellular segment spans residues D27–G185. Cystine bridges form between C48/C114, C105/C145, and C128/C167. The interval M69–E90 is disordered. 4 N-linked (GlcNAc...) asparagine glycosylation sites follow: N148, N158, N163, and N173. A helical transmembrane segment spans residues M186–F209. Residues R210 to R216 lie on the Cytoplasmic side of the membrane. A helical membrane pass occupies residues N217–I236. Residues K237–R276 lie on the Extracellular side of the membrane. A helical membrane pass occupies residues V277–L300. The Cytoplasmic portion of the chain corresponds to H301–Y314. The chain crosses the membrane as a helical span at residues L315–V336. Residues R337–W355 lie on the Extracellular side of the membrane. Residues I356 to I376 form a helical membrane-spanning segment. The Cytoplasmic portion of the chain corresponds to R377–S403. Residues T404–P422 form a helical membrane-spanning segment. The Extracellular portion of the chain corresponds to Y423–Q434. A helical membrane pass occupies residues M435–N457. Over G458–M585 the chain is Cytoplasmic. Residues W468–W471 carry the Important for interaction with G proteins motif. The tract at residues P531–M585 is disordered.

It belongs to the G-protein coupled receptor 2 family. As to quaternary structure, homodimer in the absence of bound ligand. Peptide hormone binding leads to dissociation of the homodimer. N-glycosylated.

The protein resides in the cell membrane. G-protein-coupled receptor for parathyroid hormone (PTH) and for parathyroid hormone-related peptide (PTHLH). Ligand binding causes a conformation change that triggers signaling via guanine nucleotide-binding proteins (G proteins) and modulates the activity of downstream effectors, such as adenylate cyclase (cAMP). PTH1R is coupled to G(s) G alpha proteins and mediates activation of adenylate cyclase activity. PTHLH dissociates from PTH1R more rapidly than PTH; as consequence, the cAMP response induced by PTHLH decays faster than the response induced by PTH. The sequence is that of Parathyroid hormone/parathyroid hormone-related peptide receptor (PTH1R) from Didelphis virginiana (North American opossum).